The chain runs to 369 residues: Phospho-N-acetylmuramoyl-pentapeptide-transferase (369 aa).

10 helical membrane-spanning segments follow: residues 3–23 (ALLF…PLFI), 53–73 (GGIV…LLTW), 81–101 (VTPS…VGFL), 118–138 (WQKI…AITL), 162–182 (FMAL…CLIV), 198–218 (LAAG…FWQF), 240–260 (PLDL…FLWW), 267–287 (IFMG…LAIL), 290–310 (TELL…SVVL), and 347–367 (FWII…LEWI).

The protein belongs to the glycosyltransferase 4 family. MraY subfamily. Mg(2+) serves as cofactor.

The protein resides in the cell membrane. The catalysed reaction is UDP-N-acetyl-alpha-D-muramoyl-L-alanyl-gamma-D-glutamyl-meso-2,6-diaminopimeloyl-D-alanyl-D-alanine + di-trans,octa-cis-undecaprenyl phosphate = di-trans,octa-cis-undecaprenyl diphospho-N-acetyl-alpha-D-muramoyl-L-alanyl-D-glutamyl-meso-2,6-diaminopimeloyl-D-alanyl-D-alanine + UMP. Its pathway is cell wall biogenesis; peptidoglycan biosynthesis. Catalyzes the initial step of the lipid cycle reactions in the biosynthesis of the cell wall peptidoglycan: transfers peptidoglycan precursor phospho-MurNAc-pentapeptide from UDP-MurNAc-pentapeptide onto the lipid carrier undecaprenyl phosphate, yielding undecaprenyl-pyrophosphoryl-MurNAc-pentapeptide, known as lipid I. The polypeptide is Phospho-N-acetylmuramoyl-pentapeptide-transferase (Clavibacter michiganensis subsp. michiganensis (strain NCPPB 382)).